The primary structure comprises 335 residues: MKIVIDAMGGDHAPFVTVEGAVEAVKNYDIHIILTGNQPLIENELVKYDYPKERIEVIHCSEQITNEDKPVISIRRKKDSSMVVGLKLVKEKKADAIISAGNSGALLAGGLLVLGRIKGIDRPALAPVYPTAKGISVLVDAGANAECKPRNLLEFGIMGSIYAEKVLEIKNPKVCTVNIGIEEEKGTELVKEAYQLCKEGPFNFQGNVEAREIPNGYADVIVCDGFTGNVILKLTEGLASSIFSLLKEEFLKNTFTKIGALLLKPGLKSFKKKLDYTEYGGAPLLGVKGVLIKAHGSSDGKAIKNAVGQAIKFMDNKVLEHISEGVSSLGDDEFE.

Belongs to the PlsX family. In terms of assembly, homodimer. Probably interacts with PlsY.

The protein localises to the cytoplasm. It carries out the reaction a fatty acyl-[ACP] + phosphate = an acyl phosphate + holo-[ACP]. Its pathway is lipid metabolism; phospholipid metabolism. In terms of biological role, catalyzes the reversible formation of acyl-phosphate (acyl-PO(4)) from acyl-[acyl-carrier-protein] (acyl-ACP). This enzyme utilizes acyl-ACP as fatty acyl donor, but not acyl-CoA. This Alkaliphilus oremlandii (strain OhILAs) (Clostridium oremlandii (strain OhILAs)) protein is Phosphate acyltransferase.